Here is a 359-residue protein sequence, read N- to C-terminus: GTP cyclohydrolase FolE2 (359 aa).

The protein belongs to the GTP cyclohydrolase IV family.

The catalysed reaction is GTP + H2O = 7,8-dihydroneopterin 3'-triphosphate + formate + H(+). It participates in cofactor biosynthesis; 7,8-dihydroneopterin triphosphate biosynthesis; 7,8-dihydroneopterin triphosphate from GTP: step 1/1. In terms of biological role, converts GTP to 7,8-dihydroneopterin triphosphate. The protein is GTP cyclohydrolase FolE2 of Cereibacter sphaeroides (strain KD131 / KCTC 12085) (Rhodobacter sphaeroides).